Consider the following 126-residue polypeptide: Large ribosomal subunit protein uL24 (126 aa).

The disordered stretch occupies residues 1 to 23 (MKFSRDVTSSRRKQRKAHFGAPS).

It belongs to the universal ribosomal protein uL24 family. As to quaternary structure, component of the large ribosomal subunit (LSU). Mature yeast ribosomes consist of a small (40S) and a large (60S) subunit. The 40S small subunit contains 1 molecule of ribosomal RNA (18S rRNA) and at least 33 different proteins. The large 60S subunit contains 3 rRNA molecules (25S, 5.8S and 5S rRNA) and at least 46 different proteins.

The protein resides in the cytoplasm. It is found in the nucleus. It localises to the nucleolus. In terms of biological role, component of the ribosome, a large ribonucleoprotein complex responsible for the synthesis of proteins in the cell. The small ribosomal subunit (SSU) binds messenger RNAs (mRNAs) and translates the encoded message by selecting cognate aminoacyl-transfer RNA (tRNA) molecules. The large subunit (LSU) contains the ribosomal catalytic site termed the peptidyl transferase center (PTC), which catalyzes the formation of peptide bonds, thereby polymerizing the amino acids delivered by tRNAs into a polypeptide chain. The nascent polypeptides leave the ribosome through a tunnel in the LSU and interact with protein factors that function in enzymatic processing, targeting, and the membrane insertion of nascent chains at the exit of the ribosomal tunnel. This is Large ribosomal subunit protein uL24 (rpl26) from Schizosaccharomyces pombe (strain 972 / ATCC 24843) (Fission yeast).